The primary structure comprises 795 residues: Phenylalanine--tRNA ligase beta subunit (795 aa).

The 110-residue stretch at 39–148 (AGRFTGVVVG…AEAPIGQDIR (110 aa)) folds into the tRNA-binding domain. The B5 domain occupies 401 to 476 (PQPATITLRR…RVYGYDAIPN (76 aa)). D454, D460, E463, and E464 together coordinate Mg(2+). The region spanning 701–794 (SRFPANRRDI…LKQRFQASLR (94 aa)) is the FDX-ACB domain.

Belongs to the phenylalanyl-tRNA synthetase beta subunit family. Type 1 subfamily. As to quaternary structure, tetramer of two alpha and two beta subunits. The cofactor is Mg(2+).

The protein resides in the cytoplasm. The catalysed reaction is tRNA(Phe) + L-phenylalanine + ATP = L-phenylalanyl-tRNA(Phe) + AMP + diphosphate + H(+). The chain is Phenylalanine--tRNA ligase beta subunit from Sodalis glossinidius (strain morsitans).